A 207-amino-acid polypeptide reads, in one-letter code: Protein GrpE (207 aa).

2 stretches are compositionally biased toward basic and acidic residues: residues 1–11 and 57–66; these read MEENRDVKNEE and DLVKNQEEEN. The interval 1–66 is disordered; that stretch reads MEENRDVKNE…DLVKNQEEEN (66 aa).

The protein belongs to the GrpE family. In terms of assembly, homodimer.

It is found in the cytoplasm. Its function is as follows. Participates actively in the response to hyperosmotic and heat shock by preventing the aggregation of stress-denatured proteins, in association with DnaK and GrpE. It is the nucleotide exchange factor for DnaK and may function as a thermosensor. Unfolded proteins bind initially to DnaJ; upon interaction with the DnaJ-bound protein, DnaK hydrolyzes its bound ATP, resulting in the formation of a stable complex. GrpE releases ADP from DnaK; ATP binding to DnaK triggers the release of the substrate protein, thus completing the reaction cycle. Several rounds of ATP-dependent interactions between DnaJ, DnaK and GrpE are required for fully efficient folding. The polypeptide is Protein GrpE (Clostridium beijerinckii (strain ATCC 51743 / NCIMB 8052) (Clostridium acetobutylicum)).